A 709-amino-acid polypeptide reads, in one-letter code: Polyribonucleotide nucleotidyltransferase (709 aa).

2 residues coordinate Mg(2+): Asp485 and Asp491. The region spanning Pro552–Ile611 is the KH domain. Residues Gly621–Lys689 enclose the S1 motif domain.

This sequence belongs to the polyribonucleotide nucleotidyltransferase family. In terms of assembly, component of the RNA degradosome, which is a multiprotein complex involved in RNA processing and mRNA degradation. Requires Mg(2+) as cofactor.

Its subcellular location is the cytoplasm. It carries out the reaction RNA(n+1) + phosphate = RNA(n) + a ribonucleoside 5'-diphosphate. In terms of biological role, involved in mRNA degradation. Catalyzes the phosphorolysis of single-stranded polyribonucleotides processively in the 3'- to 5'-direction. This is Polyribonucleotide nucleotidyltransferase from Haemophilus influenzae (strain PittEE).